Here is a 501-residue protein sequence, read N- to C-terminus: Raftlin-2 (501 aa).

Disordered regions lie at residues 1-20 (MGCGLRKLEDPDDSSPGKIF) and 196-238 (SWNE…SRKG). A lipid anchor (N-myristoyl glycine) is attached at G2. C3 is lipidated: S-palmitoyl cysteine. Polar residues predominate over residues 224–233 (MEQNGSPSSS). Phosphoserine is present on S405. The interval 407-454 (AQTTDKKASRRIKGEDKNKATSRSIGLDTTTPQPAESRHPPEECRLSP) is disordered. T409 bears the Phosphothreonine mark. Positions 410–425 (TDKKASRRIKGEDKNK) are enriched in basic and acidic residues. Residues 427–440 (TSRSIGLDTTTPQP) are compositionally biased toward polar residues. The residue at position 430 (S430) is a Phosphoserine. A compositionally biased stretch (basic and acidic residues) spans 442-451 (ESRHPPEECR).

The protein belongs to the raftlin family.

Its subcellular location is the cell membrane. In terms of biological role, upon bacterial lipopolysaccharide stimulation, mediates clathrin-dependent internalization of TLR4 in dendritic cells, resulting in activation of TICAM1-mediated signaling and subsequent IFNB1 production. May regulate B-cell antigen receptor mediated-signaling. The protein is Raftlin-2 (RFTN2) of Pongo abelii (Sumatran orangutan).